Here is a 289-residue protein sequence, read N- to C-terminus: Iron-sulfur cluster carrier protein (289 aa).

Low complexity predominate over residues 1-18 (MAEECSGNCDSCGSSSDC). The disordered stretch occupies residues 1 to 20 (MAEECSGNCDSCGSSSDCSD). 48–55 (GKGGVGKS) is an ATP binding site.

This sequence belongs to the Mrp/NBP35 ATP-binding proteins family. As to quaternary structure, homodimer.

In terms of biological role, binds and transfers iron-sulfur (Fe-S) clusters to target apoproteins. Can hydrolyze ATP. This Methanococcus maripaludis (strain DSM 14266 / JCM 13030 / NBRC 101832 / S2 / LL) protein is Iron-sulfur cluster carrier protein.